A 145-amino-acid polypeptide reads, in one-letter code: Large ribosomal subunit protein cL37 (145 aa).

The N-terminal 63 residues, 1 to 63 (MALLCFNSFT…PRKNSIFIAS (63 aa)), are a transit peptide targeting the chloroplast. The segment at 125–145 (KRRLRKKGNWPPSKMKKLEGV) is disordered.

Belongs to the chloroplast-specific ribosomal protein cL37 family. In terms of assembly, part of the 50S ribosomal subunit.

The protein localises to the plastid. It is found in the chloroplast. The sequence is that of Large ribosomal subunit protein cL37 (PSRP5) from Pisum sativum (Garden pea).